The primary structure comprises 316 residues: MLKSNKVVLIGAGGVGSSFAYALTIDNSLVHELVIIDVNENKAKGEVMDLNHGQMFLKKNINVLFGTYKDCANADIVVITAGLNQKPGETRLDLVDKNSKIFKDIITNVVSSGFDGIFVVASNPVDIMTYVTMKYSKFPIHKVIGTGTILDTSRLRYFLSDHFNVNTQNIHSYIMGEHGDSSFATWDETKIAMKPLSEYLAEGKITELELDEIHKKVVNAAYEVIKLKGATYYAIGLGIKNIVNAIIGDQNVILPISSYINGQYGGLIKDIYIGAPAIVCKEGVKEVLNFKISPKELDKFNSSANQLKSYIDKMEF.

NAD(+) is bound by residues Val15, Asp37, Lys42, Tyr68, and 82-83 (GL). Residues Gln85, Arg91, and 123–126 (NPVD) contribute to the substrate site. NAD(+)-binding positions include 121–123 (ASN) and Thr146. 151 to 154 (DTSR) provides a ligand contact to substrate. Beta-D-fructose 1,6-bisphosphate contacts are provided by Arg156 and His171. The active-site Proton acceptor is the His178. Tyr222 carries the phosphotyrosine modification. Thr231 contacts substrate.

The protein belongs to the LDH/MDH superfamily. LDH family. In terms of assembly, homotetramer.

It localises to the cytoplasm. It catalyses the reaction (S)-lactate + NAD(+) = pyruvate + NADH + H(+). It participates in fermentation; pyruvate fermentation to lactate; (S)-lactate from pyruvate: step 1/1. Its activity is regulated as follows. Allosterically activated by fructose 1,6-bisphosphate (FBP). Functionally, catalyzes the conversion of lactate to pyruvate. The sequence is that of L-lactate dehydrogenase from Borreliella burgdorferi (strain ATCC 35210 / DSM 4680 / CIP 102532 / B31) (Borrelia burgdorferi).